A 244-amino-acid chain; its full sequence is L-xylulose reductase (244 aa).

Position 1 is an N-acetylmethionine (Met1). 11 to 39 (LVTGAGKGIGRSIVKALHAAGARVVAVSR) provides a ligand contact to NADP(+). Arg21 carries the post-translational modification Omega-N-methylarginine. At Ser46 the chain carries Phosphoserine. Ser136 contributes to the substrate binding site. Catalysis depends on Tyr149, which acts as the Proton acceptor. The active site involves Lys153.

This sequence belongs to the short-chain dehydrogenases/reductases (SDR) family. In terms of assembly, homotetramer.

The protein localises to the membrane. The catalysed reaction is xylitol + NADP(+) = L-xylulose + NADPH + H(+). Functionally, catalyzes the NADPH-dependent reduction of several pentoses, tetroses, trioses, alpha-dicarbonyl compounds and L-xylulose. Participates in the uronate cycle of glucose metabolism. May play a role in the water absorption and cellular osmoregulation in the proximal renal tubules by producing xylitol, an osmolyte, thereby preventing osmolytic stress from occurring in the renal tubules. This chain is L-xylulose reductase (DCXR), found in Bos taurus (Bovine).